We begin with the raw amino-acid sequence, 393 residues long: Methylthioribose kinase (393 aa).

ATP-binding positions include Asn-38, Lys-53, and 107 to 109 (EDL). Residue Asp-225 coordinates substrate. 242–244 (DPE) contributes to the ATP binding site. Arg-332 lines the substrate pocket.

It belongs to the methylthioribose kinase family. Homodimer.

It catalyses the reaction 5-(methylsulfanyl)-D-ribose + ATP = 5-(methylsulfanyl)-alpha-D-ribose 1-phosphate + ADP + H(+). Its pathway is amino-acid biosynthesis; L-methionine biosynthesis via salvage pathway; S-methyl-5-thio-alpha-D-ribose 1-phosphate from S-methyl-5'-thioadenosine (hydrolase route): step 2/2. Functionally, catalyzes the phosphorylation of methylthioribose into methylthioribose-1-phosphate. This chain is Methylthioribose kinase, found in Bacillus cereus (strain ATCC 14579 / DSM 31 / CCUG 7414 / JCM 2152 / NBRC 15305 / NCIMB 9373 / NCTC 2599 / NRRL B-3711).